We begin with the raw amino-acid sequence, 327 residues long: Lipoyl synthase (327 aa).

Positions 74, 79, 85, 100, 104, 107, and 314 each coordinate [4Fe-4S] cluster. One can recognise a Radical SAM core domain in the interval 86–303; sequence FSGGTATFMI…AEEGEKMGFK (218 aa).

It belongs to the radical SAM superfamily. Lipoyl synthase family. The cofactor is [4Fe-4S] cluster.

It localises to the cytoplasm. The catalysed reaction is [[Fe-S] cluster scaffold protein carrying a second [4Fe-4S](2+) cluster] + N(6)-octanoyl-L-lysyl-[protein] + 2 oxidized [2Fe-2S]-[ferredoxin] + 2 S-adenosyl-L-methionine + 4 H(+) = [[Fe-S] cluster scaffold protein] + N(6)-[(R)-dihydrolipoyl]-L-lysyl-[protein] + 4 Fe(3+) + 2 hydrogen sulfide + 2 5'-deoxyadenosine + 2 L-methionine + 2 reduced [2Fe-2S]-[ferredoxin]. The protein operates within protein modification; protein lipoylation via endogenous pathway; protein N(6)-(lipoyl)lysine from octanoyl-[acyl-carrier-protein]: step 2/2. Its function is as follows. Catalyzes the radical-mediated insertion of two sulfur atoms into the C-6 and C-8 positions of the octanoyl moiety bound to the lipoyl domains of lipoate-dependent enzymes, thereby converting the octanoylated domains into lipoylated derivatives. The sequence is that of Lipoyl synthase from Pseudomonas aeruginosa (strain LESB58).